A 149-amino-acid polypeptide reads, in one-letter code: Endoribonuclease YbeY (149 aa).

Residues His-101, His-105, and His-111 each contribute to the Zn(2+) site.

The protein belongs to the endoribonuclease YbeY family. Requires Zn(2+) as cofactor.

Its subcellular location is the cytoplasm. In terms of biological role, single strand-specific metallo-endoribonuclease involved in late-stage 70S ribosome quality control and in maturation of the 3' terminus of the 16S rRNA. The sequence is that of Endoribonuclease YbeY from Thermotoga neapolitana (strain ATCC 49049 / DSM 4359 / NBRC 107923 / NS-E).